The primary structure comprises 274 residues: MADPLGAAGRLPAVFMTPGTSSFADFLSRSAPHLLPGARSGLPGPVTEVAHGTTIVAVAFPGGVIMAGDRRATQGHMIAQRDVEKVHHADDYSCVGYAGTAGVGAELIRLFQVELEHYEKIEGSTLSLDAKANRLAAMVKGNLPMALQGLAVVPLFAGYDLDTGKGRIFSYDIAAAKSEERTYESIGSGSVFAKGSLKKRFRSDLSQDDAVRISVEALYDAADDDSATGGPDVIRKLYPIVAVVTADGYRRYADDEIEPVVTAIIADRSTNSGG.

A propeptide spans 1–52 (MADPLGAAGRLPAVFMTPGTSSFADFLSRSAPHLLPGARSGLPGPVTEVAHG) (removed in mature form; by autocatalysis). T53 (nucleophile) is an active-site residue.

The protein belongs to the peptidase T1B family. As to quaternary structure, the 20S proteasome core is composed of 14 alpha and 14 beta subunits that assemble into four stacked heptameric rings, resulting in a barrel-shaped structure. The two inner rings, each composed of seven catalytic beta subunits, are sandwiched by two outer rings, each composed of seven alpha subunits. The catalytic chamber with the active sites is on the inside of the barrel. Has a gated structure, the ends of the cylinder being occluded by the N-termini of the alpha-subunits. Is capped by the proteasome-associated ATPase, ARC.

It is found in the cytoplasm. It carries out the reaction Cleavage of peptide bonds with very broad specificity.. Its pathway is protein degradation; proteasomal Pup-dependent pathway. With respect to regulation, the formation of the proteasomal ATPase ARC-20S proteasome complex, likely via the docking of the C-termini of ARC into the intersubunit pockets in the alpha-rings, may trigger opening of the gate for substrate entry. Interconversion between the open-gate and close-gate conformations leads to a dynamic regulation of the 20S proteasome proteolysis activity. Its function is as follows. Component of the proteasome core, a large protease complex with broad specificity involved in protein degradation. The protein is Proteasome subunit beta of Frankia casuarinae (strain DSM 45818 / CECT 9043 / HFP020203 / CcI3).